Reading from the N-terminus, the 576-residue chain is MSEKNSFNPEGFSYYDCNRIFPYCHNGKCKNFSKLMYLIIKERIYNGHSIIIDHLNQNKNEINHQNEHGWTALMIASVTSSYWCTIDTVKLLLENGADPNIPNYKGETALGLVVGSLTRINCLEINQRTNFLKTAQLLIEYGANVNFQNDFGDSILNHSGGFILNSSLQYNNFDIIKILLDNNTNPNISNNKGNTLLHNICIYNQSCDDIIKLLLNYNVDLNSINLKRKTVLMYLCKFYNKTNNVNSIKLLLKNGANPNIQNTKGNTAMMYLFNKFYHEYGDNKYNIIKLLLQYGANPNIKNNSGISVLLRASTIQNGWERKNIIKFLLKHGADPNITNNQGLTFLMLLVKNPQNHMTKEFLNFVLKYVDPNIKCNKGKNILHYIPSESIDSPDILKRLLEFTTNPNARDYKGRTPLMLACKKFTSTNDIVKINLLVEYSVISLTDNNGKKALDYAMNNTSNIRLFMVSILLEKGDTFDVNIKNDPLSKCLNFVKQSSIAKQKYDIMLSKINIEANKFILRPSSIRTKILTVNWYIEHHNFEKLALCDYSQLMEYLGATDIDDLKLRIMENINYMD.

11 ANK repeats span residues 68–101 (HGWTALMIASVTSSYWCTIDTVKLLLENGADPNI), 118–147 (TRINCLEINQRTNFLKTAQLLIEYGANVNF), 159–188 (SGGFILNSSLQYNNFDIIKILLDNNTNPNI), 192–223 (KGNTLLHNICIYNQSCDDIIKLLLNYNVDLNS), 227–260 (KRKTVLMYLCKFYNKTNNVNSIKLLLKNGANPNI), 264–300 (KGNTAMMYLFNKFYHEYGDNKYNIIKLLLQYGANPNI), 304–337 (SGISVLLRASTIQNGWERKNIIKFLLKHGADPNI), 341–373 (QGLTFLMLLVKNPQNHMTKEFLNFVLKYVDPNI), 377–408 (KGKNILHYIPSESIDSPDILKRLLEFTTNPNA), 412–446 (KGRTPLMLACKKFTSTNDIVKINLLVEYSVISLTD), and 448–480 (NGKKALDYAMNNTSNIRLFMVSILLEKGDTFDV).

The chain is Putative ankyrin repeat protein L86 from Acanthamoeba polyphaga mimivirus (APMV).